Here is a 225-residue protein sequence, read N- to C-terminus: Putative amino-acid transporter YggA (225 aa).

5 helical membrane passes run 1 to 21, 37 to 57, 65 to 85, 116 to 136, and 150 to 170; these read MFAT…PIGA, LLTA…GVFG, SPIG…WFGI, LGVT…LGSF, and AVAM…AVVL.

It belongs to the LysE/ArgO transporter (TC 2.A.75) family.

The protein resides in the cell membrane. The polypeptide is Putative amino-acid transporter YggA (Aeromonas hydrophila).